A 425-amino-acid chain; its full sequence is Serine--tRNA ligase (425 aa).

230 to 232 (TAE) lines the L-serine pocket. Residue 261-263 (RSE) participates in ATP binding. E284 contributes to the L-serine binding site. Residue 348–351 (EISS) coordinates ATP. An L-serine-binding site is contributed by S384.

Belongs to the class-II aminoacyl-tRNA synthetase family. Type-1 seryl-tRNA synthetase subfamily. In terms of assembly, homodimer. The tRNA molecule binds across the dimer.

It localises to the cytoplasm. The enzyme catalyses tRNA(Ser) + L-serine + ATP = L-seryl-tRNA(Ser) + AMP + diphosphate + H(+). It catalyses the reaction tRNA(Sec) + L-serine + ATP = L-seryl-tRNA(Sec) + AMP + diphosphate + H(+). Its pathway is aminoacyl-tRNA biosynthesis; selenocysteinyl-tRNA(Sec) biosynthesis; L-seryl-tRNA(Sec) from L-serine and tRNA(Sec): step 1/1. Catalyzes the attachment of serine to tRNA(Ser). Is also able to aminoacylate tRNA(Sec) with serine, to form the misacylated tRNA L-seryl-tRNA(Sec), which will be further converted into selenocysteinyl-tRNA(Sec). The polypeptide is Serine--tRNA ligase (Streptococcus thermophilus (strain ATCC BAA-491 / LMD-9)).